We begin with the raw amino-acid sequence, 277 residues long: uncharacterized protein (277 aa).

Disordered regions lie at residues 33–168 (KNDN…VTTR) and 210–277 (NKLL…PIEF). Basic and acidic residues predominate over residues 34–45 (NDNDERTAHEES). Over residues 86-99 (LKSKSKRKTKKGGS) the composition is skewed to basic residues. Basic and acidic residues-rich tracts occupy residues 100–113 (KPRE…KHIV), 151–168 (AKEL…VTTR), and 216–230 (TNED…NKEK). Positions 231–241 (DRKRRERRTAR) are enriched in basic residues. Over residues 242 to 258 (RKDERKQEKKQEKKQDN) the composition is skewed to basic and acidic residues. A compositionally biased stretch (polar residues) spans 259-271 (KTSQSFPSSTDMN).

The protein resides in the cytoplasm. This is an uncharacterized protein from Saccharomyces cerevisiae (strain ATCC 204508 / S288c) (Baker's yeast).